Reading from the N-terminus, the 104-residue chain is MAKNNQKIRIRLKAYDHMALDQSAEKIVETAKKSGAEVSGPVPLPTEKQIITILRAVHKYKDSREQFEMRTHKRLIDILNPTPKTVDALMRLDLPAGVDIEIKL.

It belongs to the universal ribosomal protein uS10 family. Part of the 30S ribosomal subunit.

Functionally, involved in the binding of tRNA to the ribosomes. The sequence is that of Small ribosomal subunit protein uS10 from Alkaliphilus oremlandii (strain OhILAs) (Clostridium oremlandii (strain OhILAs)).